A 960-amino-acid chain; its full sequence is Collagenase ColA (960 aa).

The N-terminal stretch at 1–30 (MNKNLRFTQMMIGISTMALSFGSIQTQVSA) is a signal peptide. Residues 31–92 (EETAPYNILQ…KRDEIQLKQS (62 aa)) constitute a propeptide that is removed on maturation. An activator domain region spans residues 93–365 (YTLAELNKMP…AVEQMKTNYG (273 aa)). The tract at residues 93 to 764 (YTLAELNKMP…VFHGVATEEK (672 aa)) is S1 metalloprotease domain. The catalytic subdomain stretch occupies residues 375–644 (DLQKIREEGK…MQQLIDNQDK (270 aa)). H500 contributes to the Zn(2+) binding site. The active site involves E501. Zn(2+) contacts are provided by H504 and E532. Positions 652-764 (NDYLIQHAPK…VFHGVATEEK (113 aa)) are helper subdomain. The PKD domain maps to 768 to 849 (TTIVNMNGPY…ESKEQTKVTV (82 aa)). The span at 836–845 (SRGKESKEQT) shows a compositional bias: basic and acidic residues. The disordered stretch occupies residues 836–859 (SRGKESKEQTKVTVKQDPQTSESY). The span at 846-857 (KVTVKQDPQTSE) shows a compositional bias: polar residues. Residues 852 to 960 (DPQTSESYEE…KNGEYSLLVK (109 aa)) are collagen-binding domain.

This sequence belongs to the peptidase M9B family. Collagenase subfamily. The cofactor is Ca(2+). Requires Zn(2+) as cofactor.

The protein localises to the secreted. It carries out the reaction Digestion of native collagen in the triple helical region at Xaa-|-Gly bonds. With synthetic peptides, a preference is shown for Gly at P3 and P1', Pro and Ala at P2 and P2', and hydroxyproline, Ala or Arg at P3'.. Functionally, acts as a true collagenase, which is highly active and efficiently targets native tropocollagen. In vitro, can also cleave gelatin and the synthetic peptide FALGPA (furylacryloyl-Leu-Gly-Pro-Ala). May contribute to bacterial virulence in endophthalmitis or opportunistic infections via collagen degradation in the host extracellular matrix (ECM). This is Collagenase ColA from Bacillus cereus (strain ATCC 14579 / DSM 31 / CCUG 7414 / JCM 2152 / NBRC 15305 / NCIMB 9373 / NCTC 2599 / NRRL B-3711).